The sequence spans 376 residues: N-acetyldiaminopimelate deacetylase (376 aa).

The active site involves aspartate 69. The active-site Proton acceptor is the glutamate 128.

This sequence belongs to the peptidase M20A family. N-acetyldiaminopimelate deacetylase subfamily.

It carries out the reaction N-acetyl-(2S,6S)-2,6-diaminopimelate + H2O = (2S,6S)-2,6-diaminopimelate + acetate. Its pathway is amino-acid biosynthesis; L-lysine biosynthesis via DAP pathway; LL-2,6-diaminopimelate from (S)-tetrahydrodipicolinate (acetylase route): step 3/3. In terms of biological role, catalyzes the conversion of N-acetyl-diaminopimelate to diaminopimelate and acetate. The polypeptide is N-acetyldiaminopimelate deacetylase (Streptococcus pneumoniae (strain P1031)).